The chain runs to 528 residues: Sulfhydryl oxidase 1 (528 aa).

Residues methionine 1–alanine 19 form the signal peptide. Residues asparagine 35–glycine 170 enclose the Thioredoxin domain. N-linked (GlcNAc...) asparagine glycosylation occurs at asparagine 47. Residues cysteine 72 and cysteine 75 each act as nucleophile in the active site. A disulfide bridge links cysteine 72 with cysteine 75. 2 N-linked (GlcNAc...) asparagine glycosylation sites follow: asparagine 186 and asparagine 297. Cysteine 292 and cysteine 304 are oxidised to a cystine. In terms of domain architecture, ERV/ALR sulfhydryl oxidase spans serine 295–tryptophan 397. Residues arginine 300, tryptophan 307, histidine 311, aspartate 341, histidine 345, tryptophan 368 to asparagine 375, lysine 394, and tryptophan 397 contribute to the FAD site. Cysteine 339 and cysteine 342 are joined by a disulfide. The cysteines at positions 403 and 406 are disulfide-linked.

FAD serves as cofactor. As to expression, highly expressed in roots.

It localises to the secreted. Its subcellular location is the cell wall. It catalyses the reaction 2 R'C(R)SH + O2 = R'C(R)S-S(R)CR' + H2O2. Functionally, sulfhydryl oxidase involved in the regulation of cation homeostasis. Positively regulates shoot accumulation of K(+) and inhibits accumulation of toxic cations. Acts at the level of root K(+) efflux systems involved in xylem loading (root symplast-xylem interface). This is Sulfhydryl oxidase 1 (QSOX1) from Arabidopsis thaliana (Mouse-ear cress).